The sequence spans 477 residues: MIFFDKLHQNISQNQSLLFVGLDPNPEMMPGRYSSQDIIDGLWDWLQFIIAETADFVCAYKPTLGFYEALGVPGLELLQKTLAAIPSHIPIILDAKHSDLNTSTIFAKTVFTQWGVDAITLSPYTGQDHVAPFLVYPDKAVFILCSTSNPGAEALQQYPTRESPLYLQVVQESKNWGTPEQLGLEVGTTNAEVLARIRQVAPERMIMVRSIWAEGGNLNRILEVGLNTDGNGLLIPVPQDMLASANLSKEIQSLRAEINQVRDITVRDVASCSVWLPDVFTVKQHPLHDLILQLYDIDCIMFGNFVQASGAVFPYYIDLRKIISNPQVFNQVLSGYENIVKNLTFDRLAGIPYGSLPTATGLALRLNCPMIFPRKEVKAHGTRRLIEGNFRTGEVVVVVDDILISGKSVMEGADKLKSAGLNVHDIVVFIDHEQGVKDKLQANGYRGHAVLTISEITSVLHQAGRINDEQFLALTAE.

The interval 1-273 (MIFFDKLHQN…ITVRDVASCS (273 aa)) is OMP decarboxylase. Lysine 96 serves as the catalytic Proton donor. Residues 274-477 (VWLPDVFTVK…DEQFLALTAE (204 aa)) are orotate phosphoribosyltransferase. 5-phospho-alpha-D-ribose 1-diphosphate contacts are provided by residues arginine 374, lysine 375, lysine 378, histidine 380, and 400–408 (DDILISGKS).

The protein in the N-terminal section; belongs to the OMP decarboxylase family. Type 2 subfamily. In the C-terminal section; belongs to the purine/pyrimidine phosphoribosyltransferase family. Mg(2+) serves as cofactor.

It carries out the reaction orotidine 5'-phosphate + H(+) = UMP + CO2. It catalyses the reaction orotidine 5'-phosphate + diphosphate = orotate + 5-phospho-alpha-D-ribose 1-diphosphate. It functions in the pathway pyrimidine metabolism; UMP biosynthesis via de novo pathway; UMP from orotate: step 1/2. The protein operates within pyrimidine metabolism; UMP biosynthesis via de novo pathway; UMP from orotate: step 2/2. In terms of biological role, catalyzes the transfer of a ribosyl phosphate group from 5-phosphoribose 1-diphosphate to orotate, leading to the formation of orotidine monophosphate (OMP). Its function is as follows. Catalyzes the decarboxylation of orotidine monophosphate (OMP) to uridine monophosphate (UMP). The protein is Bifunctional enzyme PyrF/PyrE (pyrFE) of Nostoc sp. (strain PCC 7120 / SAG 25.82 / UTEX 2576).